Here is a 98-residue protein sequence, read N- to C-terminus: Omega-hexatoxin-Hr2b (98 aa).

Positions 1-22 (MKFSKLSLTLALILTQVLFVLC) are cleaved as a signal peptide. A propeptide spanning residues 24 to 56 (KINEDFMKHGLESQALHDEIRKPIDSENPDTER) is cleaved from the precursor. Disulfide bonds link Cys-60–Cys-74, Cys-67–Cys-80, and Cys-73–Cys-85. Leu-97 carries the post-translational modification Leucine amide.

Belongs to the neurotoxin 15 family. 02 (omega-actx) subfamily. In terms of tissue distribution, expressed by the venom gland.

It localises to the secreted. Functionally, potent inhibitor of insect, but not mammalian, voltage-gated calcium channels (Cav). The chain is Omega-hexatoxin-Hr2b from Atrax robustus (Sydney funnel-web spider).